The chain runs to 80 residues: CLAVATA3/ESR (CLE)-related protein 4 (80 aa).

The N-terminal stretch at 1–22 (MASFKLWVCLILLLLEFSVHQC) is a signal peptide. The tract at residues 55–80 (SKDGQTVLGTLDSKRLSPGGPDPRHH) is disordered. P72 and P75 each carry hydroxyproline. The O-linked (Ara...) hydroxyproline glycan is linked to P75.

Belongs to the CLV3/ESR signal peptide family. The O-glycosylation (arabinosylation) of the hydroxyproline Pro-75 enhances binding affinity of the CLE4p peptide for its receptor. As to expression, expressed in roots and seedlings.

It localises to the secreted. It is found in the extracellular space. In terms of biological role, extracellular signal peptide that regulates cell fate. The protein is CLAVATA3/ESR (CLE)-related protein 4 of Arabidopsis thaliana (Mouse-ear cress).